The chain runs to 108 residues: LBH domain-containing protein 2 (108 aa).

Residues 1 to 11 (MSTPRPAPPQP) show a composition bias toward pro residues. The disordered stretch occupies residues 1 to 108 (MSTPRPAPPQ…SEDPAAPARG (108 aa)). An LBH domain is found at 37-62 (QRLPSIVVEPSEADPVESGELRWPLE). Positions 63–85 (SAQRGPSQSRAAAAPSPSLPGEP) are enriched in low complexity.

This chain is LBH domain-containing protein 2, found in Homo sapiens (Human).